The primary structure comprises 719 residues: Catalase-3 (719 aa).

An N-terminal signal peptide occupies residues 1–18 (MRVNALLPLSGLIGTALA). Residues 19–30 (ACPFADPSALGR) constitute a propeptide that is removed on maturation. Residues His-102 and Asn-175 contribute to the active site. Tyr-389 is a heme binding site.

Belongs to the catalase family. Heme serves as cofactor.

The enzyme catalyses 2 H2O2 = O2 + 2 H2O. In terms of biological role, occurs in almost all aerobically respiring organisms and serves to protect cells from the toxic effects of hydrogen peroxide. This chain is Catalase-3 (cat-3), found in Neurospora crassa (strain ATCC 24698 / 74-OR23-1A / CBS 708.71 / DSM 1257 / FGSC 987).